Reading from the N-terminus, the 146-residue chain is UPF0178 protein BAMEG_1545 (146 aa).

The protein belongs to the UPF0178 family.

The sequence is that of UPF0178 protein BAMEG_1545 from Bacillus anthracis (strain CDC 684 / NRRL 3495).